The chain runs to 114 residues: Large ribosomal subunit protein bL17 (114 aa).

Belongs to the bacterial ribosomal protein bL17 family. As to quaternary structure, part of the 50S ribosomal subunit. Contacts protein L32.

In Elusimicrobium minutum (strain Pei191), this protein is Large ribosomal subunit protein bL17.